Consider the following 555-residue polypeptide: CTP synthase (555 aa).

The amidoligase domain stretch occupies residues 1–267 (MAKFVFVTGG…CKEVLDCLDL (267 aa)). CTP is bound at residue S13. A UTP-binding site is contributed by S13. ATP-binding positions include 14–19 (SIGKGI) and D71. Positions 71 and 141 each coordinate Mg(2+). CTP contacts are provided by residues 148–150 (DIE), 188–193 (KTKPTQ), and K224. UTP is bound by residues 188 to 193 (KTKPTQ) and K224. The Glutamine amidotransferase type-1 domain occupies 292 to 534 (KVALVGKYVQ…IQAAQIRVPS (243 aa)). G354 is an L-glutamine binding site. C381 acts as the Nucleophile; for glutamine hydrolysis in catalysis. L-glutamine contacts are provided by residues 382–385 (LGMQ), E405, and R462. Active-site residues include H507 and E509. Positions 536-555 (PSEAFNPQSKIIEKKSLEQQ) are disordered. Over residues 546–555 (IIEKKSLEQQ) the composition is skewed to basic and acidic residues.

It belongs to the CTP synthase family. Homotetramer.

It catalyses the reaction UTP + L-glutamine + ATP + H2O = CTP + L-glutamate + ADP + phosphate + 2 H(+). The enzyme catalyses L-glutamine + H2O = L-glutamate + NH4(+). The catalysed reaction is UTP + NH4(+) + ATP = CTP + ADP + phosphate + 2 H(+). Its pathway is pyrimidine metabolism; CTP biosynthesis via de novo pathway; CTP from UDP: step 2/2. Its activity is regulated as follows. Allosterically activated by GTP, when glutamine is the substrate; GTP has no effect on the reaction when ammonia is the substrate. The allosteric effector GTP functions by stabilizing the protein conformation that binds the tetrahedral intermediate(s) formed during glutamine hydrolysis. Inhibited by the product CTP, via allosteric rather than competitive inhibition. Catalyzes the ATP-dependent amination of UTP to CTP with either L-glutamine or ammonia as the source of nitrogen. Regulates intracellular CTP levels through interactions with the four ribonucleotide triphosphates. This is CTP synthase from Prochlorococcus marinus (strain NATL1A).